The sequence spans 305 residues: UDP-3-O-acyl-N-acetylglucosamine deacetylase (305 aa).

Zn(2+) contacts are provided by His79, His238, and Asp242. His265 (proton donor) is an active-site residue.

Belongs to the LpxC family. Zn(2+) serves as cofactor.

It carries out the reaction a UDP-3-O-[(3R)-3-hydroxyacyl]-N-acetyl-alpha-D-glucosamine + H2O = a UDP-3-O-[(3R)-3-hydroxyacyl]-alpha-D-glucosamine + acetate. It participates in glycolipid biosynthesis; lipid IV(A) biosynthesis; lipid IV(A) from (3R)-3-hydroxytetradecanoyl-[acyl-carrier-protein] and UDP-N-acetyl-alpha-D-glucosamine: step 2/6. Its function is as follows. Catalyzes the hydrolysis of UDP-3-O-myristoyl-N-acetylglucosamine to form UDP-3-O-myristoylglucosamine and acetate, the committed step in lipid A biosynthesis. The protein is UDP-3-O-acyl-N-acetylglucosamine deacetylase of Salmonella arizonae (strain ATCC BAA-731 / CDC346-86 / RSK2980).